Here is a 241-residue protein sequence, read N- to C-terminus: Putative CRISPR-associated endoribonuclease-like protein Cas6 (241 aa).

The protein belongs to the CRISPR-associated protein Cas6/Cse3/CasE family. Binds crRNA.

Its function is as follows. CRISPR (clustered regularly interspaced short palindromic repeat), is an adaptive immune system that provides protection against mobile genetic elements (viruses, transposable elements and conjugative plasmids). CRISPR clusters contain sequences complementary to antecedent mobile elements and target invading nucleic acids. CRISPR clusters are transcribed and processed into CRISPR RNA (crRNA), also called psiRNA (prokaryotic silencing) in this organism (Potential). In Pyrococcus furiosus (strain ATCC 43587 / DSM 3638 / JCM 8422 / Vc1), this protein is Putative CRISPR-associated endoribonuclease-like protein Cas6 (cas6b).